Here is a 266-residue protein sequence, read N- to C-terminus: Type III pantothenate kinase (266 aa).

15 to 22 (EIGNSSTS) serves as a coordination point for ATP. Substrate is bound by residues Tyr-105 and 112-115 (GADR). The active-site Proton acceptor is the Asp-114. Asp-135 serves as a coordination point for K(+). Position 138 (Thr-138) interacts with ATP. Residue Thr-191 participates in substrate binding.

The protein belongs to the type III pantothenate kinase family. As to quaternary structure, homodimer. It depends on NH4(+) as a cofactor. Requires K(+) as cofactor.

It is found in the cytoplasm. The enzyme catalyses (R)-pantothenate + ATP = (R)-4'-phosphopantothenate + ADP + H(+). It functions in the pathway cofactor biosynthesis; coenzyme A biosynthesis; CoA from (R)-pantothenate: step 1/5. Its function is as follows. Catalyzes the phosphorylation of pantothenate (Pan), the first step in CoA biosynthesis. The protein is Type III pantothenate kinase of Chlorobium chlorochromatii (strain CaD3).